The chain runs to 391 residues: Terminal nucleotidyltransferase 5C (391 aa).

This sequence belongs to the TENT family. Interacts with BCCIP and PABPC1; the interaction has no effect on TENT5C poly(A) polymerase function. Interacts with PLK4; this interaction leads to the TENT5C recruitment into the centrosome.

The protein localises to the nucleus. It is found in the cytoplasm. It localises to the cytoskeleton. Its subcellular location is the microtubule organizing center. The protein resides in the centrosome. The enzyme catalyses RNA(n) + ATP = RNA(n)-3'-adenine ribonucleotide + diphosphate. Catalyzes the transfer of one adenosine molecule from an ATP to an mRNA poly(A) tail bearing a 3'-OH terminal group and enhances mRNA stability and gene expression. Can also elongate RNA oligos ending with uridine molecule, provided that the sequence is adenosine-rich. Mainly targets mRNAs encoding endoplasmic reticulum-targeted protein. This chain is Terminal nucleotidyltransferase 5C, found in Macaca fascicularis (Crab-eating macaque).